A 500-amino-acid chain; its full sequence is NAD(P)H-quinone oxidoreductase chain 4, chloroplastic (500 aa).

14 helical membrane passes run 4–24 (FPWL…IFFL), 37–57 (ISIC…HFQL), 87–107 (VGSI…AWPV), 113–130 (LFYF…GLFS), 134–154 (LLLF…LLSM), 167–187 (FILY…GMGL), 211–231 (ILLY…IPLH), 242–262 (HYST…YGLI), 272–292 (AHYL…IYAA), 313–333 (MGFI…GAIL), 334–354 (QILS…TASD), 386–406 (LALP…GLIT), 417–437 (LITF…LSML), and 462–482 (LFIL…PDLV).

This sequence belongs to the complex I subunit 4 family.

The protein localises to the plastid. Its subcellular location is the chloroplast thylakoid membrane. The catalysed reaction is a plastoquinone + NADH + (n+1) H(+)(in) = a plastoquinol + NAD(+) + n H(+)(out). The enzyme catalyses a plastoquinone + NADPH + (n+1) H(+)(in) = a plastoquinol + NADP(+) + n H(+)(out). The protein is NAD(P)H-quinone oxidoreductase chain 4, chloroplastic of Agrostis stolonifera (Creeping bentgrass).